The chain runs to 975 residues: Probable outer membrane protein PmpA (975 aa).

The N-terminal stretch at 1 to 51 (MNRVIEIHAHYDQRQLSQSPNTNFLVHHPYLTLIPKFLLGALIVYAPYSFA) is a signal peptide. The 277-residue stretch at 699 to 975 (RSLIPTSYFG…SLSCGGYVGF (277 aa)) folds into the Autotransporter domain.

Belongs to the PMP outer membrane protein family.

It is found in the secreted. The protein resides in the cell wall. The protein localises to the cell outer membrane. This Chlamydia trachomatis serovar D (strain ATCC VR-885 / DSM 19411 / UW-3/Cx) protein is Probable outer membrane protein PmpA (pmpA).